Consider the following 478-residue polypeptide: V-type proton ATPase subunit H (478 aa).

It belongs to the V-ATPase H subunit family. In terms of assembly, V-ATPase is a heteromultimeric enzyme composed of a peripheral catalytic V1 complex (components A to H) attached to an integral membrane V0 proton pore complex (components: a, c, c', c'', d, e, f and VOA1). Interacts with YND1.

It is found in the vacuole membrane. Functionally, subunit of the V1 complex of vacuolar(H+)-ATPase (V-ATPase), a multisubunit enzyme composed of a peripheral complex (V1) that hydrolyzes ATP and a membrane integral complex (V0) that translocates protons. V-ATPase is responsible for acidifying and maintaining the pH of intracellular compartments. This subunit is essential for activity, but not assembly, of the enzyme complex. This subunit is also required for silencing the ATPase activity of V-ATPase when V1 is detached from V0. This chain is V-type proton ATPase subunit H, found in Saccharomyces cerevisiae (strain ATCC 204508 / S288c) (Baker's yeast).